The following is a 109-amino-acid chain: Aquaporin-2 (109 aa).

Over 1-6 the chain is Cytoplasmic; sequence SIAFSR. Residues 7–27 form a helical membrane-spanning segment; sequence AVLSEFLATLLFVFFGLGSAL. Topologically, residues 28 to 35 are extracellular; that stretch reads NWPQALPS. Residues 36–54 form a helical membrane-spanning segment; sequence VLQIAMAFGLAIGTLVQTL. The Cytoplasmic portion of the chain corresponds to 55–59; that stretch reads GHISG. The segment at residues 60–69 is an intramembrane region (discontinuously helical); sequence AHINPAVTIA. The NPA 1 signature appears at 63–65; that stretch reads NPA. The Cytoplasmic portion of the chain corresponds to 70–80; it reads CLVGCHVSFLR. The helical transmembrane segment at 81-102 threads the bilayer; the sequence is ALFYLAAQLLGAVAGAALLHEL. Residues 103–109 lie on the Extracellular side of the membrane; it reads TPPDIRG.

The protein belongs to the MIP/aquaporin (TC 1.A.8) family. In terms of assembly, homotetramer. Post-translationally, serine phosphorylation is necessary and sufficient for expression at the apical membrane. Endocytosis is not phosphorylation-dependent. In terms of processing, N-glycosylated.

It is found in the apical cell membrane. Its subcellular location is the basolateral cell membrane. The protein localises to the cell membrane. The protein resides in the cytoplasmic vesicle membrane. It localises to the golgi apparatus. It is found in the trans-Golgi network membrane. It carries out the reaction H2O(in) = H2O(out). It catalyses the reaction glycerol(in) = glycerol(out). Forms a water-specific channel that provides the plasma membranes of renal collecting duct with high permeability to water, thereby permitting water to move in the direction of an osmotic gradient. Plays an essential role in renal water homeostasis. Could also be permeable to glycerol. This chain is Aquaporin-2, found in Procavia capensis habessinica (Abyssinian hyrax).